Reading from the N-terminus, the 217-residue chain is METARDYAGALIRPLTFMGLQTKKVLLTPLIHPARPFRVSNHDRSSRRGVMASSLQELISKTLDVLVITTGLVTLVLEEDGTVVDTEEFFQTLRDNTHFMILEKGQKWTPGSKYVPVCKQPKKSGIARVTFDLYRLNPKDFLGCLNVKATMYEMYSVSYDIRCTSFKAVLRNLLRFMSYAAQMTGQFLVYAGTYMLRVLGDTEEQPSPKPSTKGWFM.

Residues 33–110 (PARPFRVSNH…ILEKGQKWTP (78 aa)) enclose the CIDE-N domain. The tract at residues 163-180 (CTSFKAVLRNLLRFMSYA) is amphipathic helix.

Belongs to the CIDE family. As to quaternary structure, homodimer. Interacts with CIDEC. Directly interacts with CEBPB. Interacts with isoform CLSTN3beta of CLSTN3; inhibiting the lipid transferase activity of CIDEA. Highly expressed in brown adipose tissue and, at lower levels, in white adipose tissue (at protein level). Undetectable in undifferentiated preadipocytes. Expressed in mammary gland during pregnancy and lactation, in epithelial cells, but not in the surrounding adipose tissue. Secreted into milk via milk fat globules.

Its subcellular location is the lipid droplet. It is found in the nucleus. The catalysed reaction is a triacyl-sn-glycerol(in) = a triacyl-sn-glycerol(out). In terms of biological role, lipid transferase that promotes unilocular lipid droplet formation by mediating lipid droplet fusion. Lipid droplet fusion promotes their enlargement, restricting lipolysis and favoring lipid storage. Localizes on the lipid droplet surface, at focal contact sites between lipid droplets, and mediates atypical lipid droplet fusion by promoting directional net neutral lipid transfer from the smaller to larger lipid droplets. The transfer direction may be driven by the internal pressure difference between the contacting lipid droplet pair and occurs at a lower rate than that promoted by CIDEC. May also act as a CEBPB coactivator in epithelial cells to control the expression of a subset of CEBPB downstream target genes, including ID2, IGF1, PRLR, SOCS1, SOCS3, XDH, but not casein. By interacting with CEBPB, strengthens the association of CEBPB with the XDH promoter, increases histone acetylation and dissociates HDAC1 from the promoter. When overexpressed, induces apoptosis; the physiological significance of its role in apoptosis is unclear. In Mus musculus (Mouse), this protein is Lipid transferase CIDEA.